The primary structure comprises 365 residues: tRNA/tmRNA (uracil-C(5))-methyltransferase (365 aa).

S-adenosyl-L-methionine is bound by residues Q189, Y217, N222, E238, and D298. C323 functions as the Nucleophile in the catalytic mechanism. The active-site Proton acceptor is the E357.

Belongs to the class I-like SAM-binding methyltransferase superfamily. RNA M5U methyltransferase family. TrmA subfamily.

It catalyses the reaction uridine(54) in tRNA + S-adenosyl-L-methionine = 5-methyluridine(54) in tRNA + S-adenosyl-L-homocysteine + H(+). It carries out the reaction uridine(341) in tmRNA + S-adenosyl-L-methionine = 5-methyluridine(341) in tmRNA + S-adenosyl-L-homocysteine + H(+). Dual-specificity methyltransferase that catalyzes the formation of 5-methyluridine at position 54 (m5U54) in all tRNAs, and that of position 341 (m5U341) in tmRNA (transfer-mRNA). The protein is tRNA/tmRNA (uracil-C(5))-methyltransferase of Shewanella amazonensis (strain ATCC BAA-1098 / SB2B).